The following is a 1481-amino-acid chain: Neuropathy target esterase sws (1481 aa).

Topologically, residues 1-34 (MDVLELLRASANGCYNTIFSDAWSQYVSQQITSS) are lumenal. The helical transmembrane segment at 35 to 55 (LYLYIALGILTVLFVAWFIYF) threads the bilayer. At 56-1481 (KRLARLRLRD…KENKNVNTKN (1426 aa)) the chain is on the cytoplasmic side. 175–302 (IFGHFEKPVF…IRVIQVIMIR (128 aa)) contributes to the a nucleoside 3',5'-cyclic phosphate binding site. A disordered region spans residues 336 to 420 (HLNSQSQSSQ…NNVQLPEVHG (85 aa)). 2 stretches are compositionally biased toward low complexity: residues 339 to 379 (SQSQ…LPLQ) and 401 to 412 (SGPNPNPNSGNN). Serine 448 carries the post-translational modification Phosphoserine. Residues 492-624 (ELGL…VVRR) and 613-740 (IVLD…LSHR) contribute to the a nucleoside 3',5'-cyclic phosphate site. The PNPLA domain maps to 967-1133 (LVLGGGGARG…VNNLPGHLWR (167 aa)). Residues 971–976 (GGGARG) carry the GXGXXG motif. The short motif at 998 to 1002 (GVSIG) is the GXSXG element. Catalysis depends on serine 1000, which acts as the Nucleophile. Catalysis depends on aspartate 1120, which acts as the Proton acceptor. The short motif at 1120 to 1122 (DGG) is the DGA/G element. Serine 1214 is modified (phosphoserine). The disordered stretch occupies residues 1366-1481 (LSLSEAEMDS…KENKNVNTKN (116 aa)). Basic and acidic residues-rich tracts occupy residues 1379 to 1390 (IDFRSDSKKDKA) and 1400 to 1410 (KDNEDKTDAVD). Positions 1445-1457 (TNTMTTQTTSPTT) are enriched in low complexity.

This sequence belongs to the NTE family. Interacts with Pka-C3; interaction inhibits the catalytic function of Pka-C3 and the esterase activity of sws.

The protein resides in the endoplasmic reticulum membrane. The enzyme catalyses a 1-acyl-sn-glycero-3-phosphocholine + H2O = sn-glycerol 3-phosphocholine + a fatty acid + H(+). Phospholipase B that deacylates intracellular phosphatidylcholine (PtdCho), generating glycerophosphocholine (GroPtdCho). This deacylation occurs at both sn-2 and sn-1 positions of PtdCho. Its specific chemical modification by certain organophosphorus (OP) compounds leads to distal axonopathy. Plays a role in the signaling mechanism between neurons and glia that regulates glia wrapping during development of the adult brain. Essential for membrane lipid homeostasis and cell survival in both neurons and glia of the adult brain. This is Neuropathy target esterase sws from Drosophila willistoni (Fruit fly).